The primary structure comprises 169 residues: ATP synthase subunit b (169 aa).

Residues 12-32 (HIYLGNALWYLICFAILLLLI) traverse the membrane as a helical segment.

It belongs to the ATPase B chain family. In terms of assembly, F-type ATPases have 2 components, F(1) - the catalytic core - and F(0) - the membrane proton channel. F(1) has five subunits: alpha(3), beta(3), gamma(1), delta(1), epsilon(1). F(0) has three main subunits: a(1), b(2) and c(10-14). The alpha and beta chains form an alternating ring which encloses part of the gamma chain. F(1) is attached to F(0) by a central stalk formed by the gamma and epsilon chains, while a peripheral stalk is formed by the delta and b chains.

It localises to the cell membrane. F(1)F(0) ATP synthase produces ATP from ADP in the presence of a proton or sodium gradient. F-type ATPases consist of two structural domains, F(1) containing the extramembraneous catalytic core and F(0) containing the membrane proton channel, linked together by a central stalk and a peripheral stalk. During catalysis, ATP synthesis in the catalytic domain of F(1) is coupled via a rotary mechanism of the central stalk subunits to proton translocation. Functionally, component of the F(0) channel, it forms part of the peripheral stalk, linking F(1) to F(0). The polypeptide is ATP synthase subunit b (Lactobacillus helveticus (strain DPC 4571)).